The following is a 397-amino-acid chain: Lipoyl synthase 2, chloroplastic (397 aa).

The N-terminal 35 residues, Met-1–Arg-35, are a transit peptide targeting the chloroplast. Positions Ala-49–Lys-85 are disordered. A compositionally biased stretch (low complexity) spans Asn-54–Ser-67. Residues Cys-128, Cys-133, Cys-139, Cys-159, Cys-163, Cys-166, and Ser-374 each contribute to the [4Fe-4S] cluster site. Residues Gly-142–Arg-363 enclose the Radical SAM core domain.

It belongs to the radical SAM superfamily. Lipoyl synthase family. It depends on [4Fe-4S] cluster as a cofactor.

The protein localises to the plastid. It localises to the chloroplast. The enzyme catalyses [[Fe-S] cluster scaffold protein carrying a second [4Fe-4S](2+) cluster] + N(6)-octanoyl-L-lysyl-[protein] + 2 oxidized [2Fe-2S]-[ferredoxin] + 2 S-adenosyl-L-methionine + 4 H(+) = [[Fe-S] cluster scaffold protein] + N(6)-[(R)-dihydrolipoyl]-L-lysyl-[protein] + 4 Fe(3+) + 2 hydrogen sulfide + 2 5'-deoxyadenosine + 2 L-methionine + 2 reduced [2Fe-2S]-[ferredoxin]. Its pathway is protein modification; protein lipoylation via endogenous pathway; protein N(6)-(lipoyl)lysine from octanoyl-[acyl-carrier-protein]: step 2/2. Its function is as follows. Catalyzes the radical-mediated insertion of two sulfur atoms into the C-6 and C-8 positions of the octanoyl moiety bound to the lipoyl domains of lipoate-dependent enzymes, thereby converting the octanoylated domains into lipoylated derivatives. In Populus trichocarpa (Western balsam poplar), this protein is Lipoyl synthase 2, chloroplastic.